Reading from the N-terminus, the 878-residue chain is Probable di- and tripeptidase DUG2 (878 aa).

WD repeat units follow at residues 18 to 57, 68 to 107, 235 to 274, 282 to 322, and 362 to 405; these read NHAF…LIHT, HTRS…IRDD, RFNQ…GQNT, DKID…IIST, and PQQG…SAVP. His520 contributes to the Zn(2+) binding site. Asp522 is an active-site residue. Residue Asp553 participates in Zn(2+) binding. Catalysis depends on Glu586, which acts as the Proton acceptor. Position 587 (Glu587) interacts with Zn(2+). The WD 6 repeat unit spans residues 608 to 651; that stretch reads IDWILLSNSTWVDQEHPCLNYGLRGVINAQIKVWSDKPDGHSGL. His853 is a binding site for Zn(2+).

Belongs to the peptidase M20A family. In terms of assembly, component of the GSH degradosomal complex composed of at least DUG1, DUG2 and DUG3. Zn(2+) is required as a cofactor.

It is found in the cytoplasm. Its subcellular location is the nucleus. Functionally, component of the GSH degradosomal complex involved in the degradation of glutathione (GSH) and other peptides containing a gamma-glu-X bond. The sequence is that of Probable di- and tripeptidase DUG2 (DUG2) from Saccharomyces cerevisiae (strain ATCC 204508 / S288c) (Baker's yeast).